The sequence spans 445 residues: KICSTOR subunit 2 (445 aa).

It belongs to the KICS2 family. In terms of assembly, part of the KICSTOR complex composed of KPTN, ITFG2, KICS2 and SZT2. SZT2 probably serves as a link between the other three proteins in the KICSTOR complex and may mediate the direct interaction with the GATOR complex via GATOR1. The KICSTOR complex interacts directly with the GATOR1 complex and most probably indirectly with the GATOR2 complex in an amino acid-independent manner.

It is found in the lysosome membrane. As part of the KICSTOR complex functions in the amino acid-sensing branch of the TORC1 signaling pathway. Recruits, in an amino acid-independent manner, the GATOR1 complex to the lysosomal membranes and allows its interaction with GATOR2 and the RAG GTPases. Functions upstream of the RAG GTPases and is required to negatively regulate mTORC1 signaling in absence of amino acids. In absence of the KICSTOR complex mTORC1 is constitutively localized to the lysosome and activated. The KICSTOR complex is also probably involved in the regulation of mTORC1 by glucose. The sequence is that of KICSTOR subunit 2 from Homo sapiens (Human).